The primary structure comprises 1436 residues: Gag-Pol polyprotein (1436 aa).

Residue Gly2 is the site of N-myristoyl glycine; by host attachment. The interval 7-31 is interaction with Gp41; it reads VLSGGKLDKWEKIRLRPRGKKRYKL. The tract at residues 8–43 is interaction with host CALM1; that stretch reads LSGGKLDKWEKIRLRPRGKKRYKLKHIVWASRELER. The segment at 12-19 is interaction with host AP3D1; it reads KLDKWEKI. The interval 14–33 is interaction with membrane phosphatidylinositol 4,5-bisphosphate and RNA; sequence DKWEKIRLRPRGKKRYKLKH. The Nuclear export signal motif lies at 16 to 22; that stretch reads WEKIRLR. The short motif at 26–32 is the Nuclear localization signal element; that stretch reads KKRYKLK. The interaction with membrane phosphatidylinositol 4,5-bisphosphate stretch occupies residues 73–77; sequence EELKS. Residues 106–128 are disordered; sequence EEQNKSKKKAQQAAADTGNGSQV. Phosphotyrosine; by host is present on Tyr132. Residues 189-227 are interaction with human PPIA/CYPA and NUP153; the sequence is NTVGGHQAAMQMLKETINEEAAEWDRLHPVHAGPIAPGQ. The dimerization/Multimerization of capsid protein p24 stretch occupies residues 277–363; that stretch reads YSPISILDIR…GGPSHKARIL (87 aa). 2 consecutive CCHC-type zinc fingers follow at residues 390–407 and 411–428; these read VKCFNCGKVGHIAKNCRA and KGCWKCGKEGHQMKDCTN. The tract at residues 446 to 465 is disordered; that stretch reads KARELSSEQTRANSPTRREL. The dimerization of protease stretch occupies residues 490–494; the sequence is PQITL. A Peptidase A2 domain is found at 509–578; sequence KEALLDTGAD…TPVNIIGRNL (70 aa). Asp514 (for protease activity; shared with dimeric partner) is an active-site residue. Dimerization of protease stretches follow at residues 538–544 and 577–589; these read GIGGFIK and NLLTQIGCTLNFP. Positions 632-822 constitute a Reverse transcriptase domain; the sequence is EGKISKIGPE…PPFLWMGYEL (191 aa). Mg(2+)-binding residues include Asp698, Asp773, and Asp774. The segment at 815–823 is RT 'primer grip'; it reads FLWMGYELH. Positions 986–1002 match the Tryptophan repeat motif motif; sequence WEAWWTEYWQATWIPEW. One can recognise an RNase H type-1 domain in the interval 1022 to 1145; that stretch reads IIGAETFYVD…VDRLVSTGIR (124 aa). Mg(2+) contacts are provided by Asp1031, Glu1066, Asp1086, and Asp1137. The segment at 1151–1192 adopts an Integrase-type zinc-finger fold; the sequence is DGIDKAQDEHEKYHSNWRAMASDFNLPPVVAKEIVASCDKCQ. Residues His1160, His1164, Cys1188, and Cys1191 each coordinate Zn(2+). Residues 1202-1352 form the Integrase catalytic domain; sequence VDCSPGIWQL…SAGERIVDII (151 aa). Positions 1212, 1264, and 1300 each coordinate Mg(2+). Positions 1371 to 1418 form a DNA-binding region, integrase-type; the sequence is FRVYYRDSRDPLWKGHAKLLWKGEGAVVIQDNSDIKVVPRRKAKIIRD.

Homotrimer; further assembles as hexamers of trimers. Interacts with gp41 (via C-terminus). Interacts with host CALM1; this interaction induces a conformational change in the Matrix protein, triggering exposure of the myristate group. Interacts with host AP3D1; this interaction allows the polyprotein trafficking to multivesicular bodies during virus assembly. Part of the pre-integration complex (PIC) which is composed of viral genome, matrix protein, Vpr and integrase. In terms of assembly, homodimer; the homodimer further multimerizes as homohexamers or homopentamers. Interacts with human PPIA/CYPA; This interaction stabilizes the capsid. Interacts with human NUP153. Interacts with host PDZD8; this interaction stabilizes the capsid. Interacts with monkey TRIM5; this interaction destabilizes the capsid. As to quaternary structure, homodimer, whose active site consists of two apposed aspartic acid residues. Heterodimer of p66 RT and p51 RT (RT p66/p51). Heterodimerization of RT is essential for DNA polymerase activity. The overall folding of the subdomains is similar in p66 RT and p51 RT but the spatial arrangements of the subdomains are dramatically different. In terms of assembly, homotetramer; may further associate as a homohexadecamer. Part of the pre-integration complex (PIC) which is composed of viral genome, matrix protein, Vpr and integrase. Interacts with human SMARCB1/INI1 and human PSIP1/LEDGF isoform 1. Interacts with human KPNA3; this interaction might play a role in nuclear import of the pre-integration complex. Interacts with human NUP153; this interaction might play a role in nuclear import of the pre-integration complex. Mg(2+) serves as cofactor. Post-translationally, specific enzymatic cleavages by the viral protease yield mature proteins. The protease is released by autocatalytic cleavage. The polyprotein is cleaved during and after budding, this process is termed maturation. Proteolytic cleavage of p66 RT removes the RNase H domain to yield the p51 RT subunit. Nucleocapsid protein p7 might be further cleaved after virus entry. In terms of processing, tyrosine phosphorylated presumably in the virion by a host kinase. Phosphorylation is apparently not a major regulator of membrane association. Phosphorylated possibly by host MAPK1; this phosphorylation is necessary for Pin1-mediated virion uncoating. Post-translationally, methylated by host PRMT6, impairing its function by reducing RNA annealing and the initiation of reverse transcription.

It localises to the host cell membrane. Its subcellular location is the host endosome. The protein resides in the host multivesicular body. The protein localises to the virion membrane. It is found in the host nucleus. It localises to the host cytoplasm. Its subcellular location is the virion. The catalysed reaction is Specific for a P1 residue that is hydrophobic, and P1' variable, but often Pro.. The enzyme catalyses Endohydrolysis of RNA in RNA/DNA hybrids. Three different cleavage modes: 1. sequence-specific internal cleavage of RNA. Human immunodeficiency virus type 1 and Moloney murine leukemia virus enzymes prefer to cleave the RNA strand one nucleotide away from the RNA-DNA junction. 2. RNA 5'-end directed cleavage 13-19 nucleotides from the RNA end. 3. DNA 3'-end directed cleavage 15-20 nucleotides away from the primer terminus.. It catalyses the reaction 3'-end directed exonucleolytic cleavage of viral RNA-DNA hybrid.. It carries out the reaction DNA(n) + a 2'-deoxyribonucleoside 5'-triphosphate = DNA(n+1) + diphosphate. Protease: The viral protease is inhibited by many synthetic protease inhibitors (PIs), such as amprenavir, atazanavir, indinavir, loprinavir, nelfinavir, ritonavir and saquinavir. Use of protease inhibitors in tritherapy regimens permit more ambitious therapeutic strategies. Reverse transcriptase/ribonuclease H: RT can be inhibited either by nucleoside RT inhibitors (NRTIs) or by non nucleoside RT inhibitors (NNRTIs). NRTIs act as chain terminators, whereas NNRTIs inhibit DNA polymerization by binding a small hydrophobic pocket near the RT active site and inducing an allosteric change in this region. Classical NRTIs are abacavir, adefovir (PMEA), didanosine (ddI), lamivudine (3TC), stavudine (d4T), tenofovir (PMPA), zalcitabine (ddC), and zidovudine (AZT). Classical NNRTIs are atevirdine (BHAP U-87201E), delavirdine, efavirenz (DMP-266), emivirine (I-EBU), and nevirapine (BI-RG-587). The tritherapies used as a basic effective treatment of AIDS associate two NRTIs and one NNRTI. Its function is as follows. Mediates, with Gag polyprotein, the essential events in virion assembly, including binding the plasma membrane, making the protein-protein interactions necessary to create spherical particles, recruiting the viral Env proteins, and packaging the genomic RNA via direct interactions with the RNA packaging sequence (Psi). Gag-Pol polyprotein may regulate its own translation, by the binding genomic RNA in the 5'-UTR. At low concentration, the polyprotein would promote translation, whereas at high concentration, the polyprotein would encapsidate genomic RNA and then shut off translation. In terms of biological role, targets the polyprotein to the plasma membrane via a multipartite membrane-binding signal, that includes its myristoylated N-terminus. Matrix protein is part of the pre-integration complex. Implicated in the release from host cell mediated by Vpu. Binds to RNA. Functionally, forms the conical core that encapsulates the genomic RNA-nucleocapsid complex in the virion. Most core are conical, with only 7% tubular. The core is constituted by capsid protein hexamer subunits. The core is disassembled soon after virion entry. Host restriction factors such as TRIM5-alpha or TRIMCyp bind retroviral capsids and cause premature capsid disassembly, leading to blocks in reverse transcription. Capsid restriction by TRIM5 is one of the factors which restricts HIV-1 to the human species. Host PIN1 apparently facilitates the virion uncoating. On the other hand, interactions with PDZD8 or CYPA stabilize the capsid. Encapsulates and protects viral dimeric unspliced genomic RNA (gRNA). Binds these RNAs through its zinc fingers. Acts as a nucleic acid chaperone which is involved in rearangement of nucleic acid secondary structure during gRNA retrotranscription. Also facilitates template switch leading to recombination. As part of the polyprotein, participates in gRNA dimerization, packaging, tRNA incorporation and virion assembly. Its function is as follows. Aspartyl protease that mediates proteolytic cleavages of Gag and Gag-Pol polyproteins during or shortly after the release of the virion from the plasma membrane. Cleavages take place as an ordered, step-wise cascade to yield mature proteins. This process is called maturation. Displays maximal activity during the budding process just prior to particle release from the cell. Also cleaves Nef and Vif, probably concomitantly with viral structural proteins on maturation of virus particles. Hydrolyzes host EIF4GI and PABP1 in order to shut off the capped cellular mRNA translation. The resulting inhibition of cellular protein synthesis serves to ensure maximal viral gene expression and to evade host immune response. Also mediates cleavage of host YTHDF3. Mediates cleavage of host CARD8, thereby activating the CARD8 inflammasome, leading to the clearance of latent HIV-1 in patient CD4(+) T-cells after viral reactivation; in contrast, HIV-1 can evade CARD8-sensing when its protease remains inactive in infected cells prior to viral budding. In terms of biological role, multifunctional enzyme that converts the viral RNA genome into dsDNA in the cytoplasm, shortly after virus entry into the cell. This enzyme displays a DNA polymerase activity that can copy either DNA or RNA templates, and a ribonuclease H (RNase H) activity that cleaves the RNA strand of RNA-DNA heteroduplexes in a partially processive 3' to 5' endonucleasic mode. Conversion of viral genomic RNA into dsDNA requires many steps. A tRNA(3)-Lys binds to the primer-binding site (PBS) situated at the 5'-end of the viral RNA. RT uses the 3' end of the tRNA primer to perform a short round of RNA-dependent minus-strand DNA synthesis. The reading proceeds through the U5 region and ends after the repeated (R) region which is present at both ends of viral RNA. The portion of the RNA-DNA heteroduplex is digested by the RNase H, resulting in a ssDNA product attached to the tRNA primer. This ssDNA/tRNA hybridizes with the identical R region situated at the 3' end of viral RNA. This template exchange, known as minus-strand DNA strong stop transfer, can be either intra- or intermolecular. RT uses the 3' end of this newly synthesized short ssDNA to perform the RNA-dependent minus-strand DNA synthesis of the whole template. RNase H digests the RNA template except for two polypurine tracts (PPTs) situated at the 5'-end and near the center of the genome. It is not clear if both polymerase and RNase H activities are simultaneous. RNase H probably can proceed both in a polymerase-dependent (RNA cut into small fragments by the same RT performing DNA synthesis) and a polymerase-independent mode (cleavage of remaining RNA fragments by free RTs). Secondly, RT performs DNA-directed plus-strand DNA synthesis using the PPTs that have not been removed by RNase H as primers. PPTs and tRNA primers are then removed by RNase H. The 3' and 5' ssDNA PBS regions hybridize to form a circular dsDNA intermediate. Strand displacement synthesis by RT to the PBS and PPT ends produces a blunt ended, linear dsDNA copy of the viral genome that includes long terminal repeats (LTRs) at both ends. Functionally, catalyzes viral DNA integration into the host chromosome, by performing a series of DNA cutting and joining reactions. This enzyme activity takes place after virion entry into a cell and reverse transcription of the RNA genome in dsDNA. The first step in the integration process is 3' processing. This step requires a complex comprising the viral genome, matrix protein, Vpr and integrase. This complex is called the pre-integration complex (PIC). The integrase protein removes 2 nucleotides from each 3' end of the viral DNA, leaving recessed CA OH's at the 3' ends. In the second step, the PIC enters cell nucleus. This process is mediated through integrase and Vpr proteins, and allows the virus to infect a non dividing cell. This ability to enter the nucleus is specific of lentiviruses, other retroviruses cannot and rely on cell division to access cell chromosomes. In the third step, termed strand transfer, the integrase protein joins the previously processed 3' ends to the 5' ends of strands of target cellular DNA at the site of integration. The 5'-ends are produced by integrase-catalyzed staggered cuts, 5 bp apart. A Y-shaped, gapped, recombination intermediate results, with the 5'-ends of the viral DNA strands and the 3' ends of target DNA strands remaining unjoined, flanking a gap of 5 bp. The last step is viral DNA integration into host chromosome. This involves host DNA repair synthesis in which the 5 bp gaps between the unjoined strands are filled in and then ligated. Since this process occurs at both cuts flanking the HIV genome, a 5 bp duplication of host DNA is produced at the ends of HIV-1 integration. Alternatively, Integrase may catalyze the excision of viral DNA just after strand transfer, this is termed disintegration. The polypeptide is Gag-Pol polyprotein (gag-pol) (Human immunodeficiency virus type 1 group M subtype B (isolate RF/HAT3) (HIV-1)).